Reading from the N-terminus, the 464-residue chain is Soluble pyridine nucleotide transhydrogenase (464 aa).

FAD is bound at residue 35 to 44; the sequence is EASSQVGGSC.

The protein belongs to the class-I pyridine nucleotide-disulfide oxidoreductase family. FAD serves as cofactor.

The protein localises to the cytoplasm. The enzyme catalyses NAD(+) + NADPH = NADH + NADP(+). Functionally, conversion of NADPH, generated by peripheral catabolic pathways, to NADH, which can enter the respiratory chain for energy generation. This Marinomonas sp. (strain MWYL1) protein is Soluble pyridine nucleotide transhydrogenase.